The following is a 276-amino-acid chain: MAIKTYKPYTPSRRFMSVLDSKDITAKSSVKGLLTKLKATAGRNNNGRITSRHKERGAKKLYRIIDFKRNKYNIEGKVVAIEYDPYRNARIALVVYPDGDKRYILQPSGLKVGDSVIAAEGGLDIKVGFAMKLKNIPIGTVVHNIEMHPGAGGQLARSAGMSAQIMGRENKYTIIRMPSSEMRYILSECMASIGVVGNEDFINVSIGKAGRNRHRGIRPQTRGSAMNPVDHPHGGGEGKTGTSGHPVSPWGTPAKGYKTRKKKASDKLIISRKKHK.

Positions Asn212–Lys276 are disordered. Over residues Tyr257–Lys276 the composition is skewed to basic residues.

Belongs to the universal ribosomal protein uL2 family. Part of the 50S ribosomal subunit. Forms a bridge to the 30S subunit in the 70S ribosome.

Its function is as follows. One of the primary rRNA binding proteins. Required for association of the 30S and 50S subunits to form the 70S ribosome, for tRNA binding and peptide bond formation. It has been suggested to have peptidyltransferase activity; this is somewhat controversial. Makes several contacts with the 16S rRNA in the 70S ribosome. This chain is Large ribosomal subunit protein uL2, found in Helicobacter acinonychis (strain Sheeba).